Here is a 486-residue protein sequence, read N- to C-terminus: Cysteine--tRNA ligase (486 aa).

Cys29 provides a ligand contact to Zn(2+). Positions 31-41 match the 'HIGH' region motif; it reads VTVYDYCHLGH. Zn(2+) is bound by residues Cys214, His239, and Glu243. The 'KMSKS' region motif lies at 271-275; it reads KMSKS. Residue Lys274 participates in ATP binding.

The protein belongs to the class-I aminoacyl-tRNA synthetase family. In terms of assembly, monomer. It depends on Zn(2+) as a cofactor.

The protein resides in the cytoplasm. The enzyme catalyses tRNA(Cys) + L-cysteine + ATP = L-cysteinyl-tRNA(Cys) + AMP + diphosphate. In Trichormus variabilis (strain ATCC 29413 / PCC 7937) (Anabaena variabilis), this protein is Cysteine--tRNA ligase.